Reading from the N-terminus, the 663-residue chain is Protein LNK2 (663 aa).

Disordered regions lie at residues 528–549 (HYTS…VIPR) and 590–663 (MEGP…KRKL). Residues 602–629 (GTEEKGNFPKCSIRETHLTKQKAQKEEG) are compositionally biased toward basic and acidic residues. Residues 639–648 (APNSGSSSTV) show a composition bias toward polar residues.

As to quaternary structure, interacts with CCA1, LHY, REV4 and REV8, but not with PRR7 or PRR9. In terms of tissue distribution, expressed in roots, stems, leaves, seedlings, cotyledons, inflorescences and siliques. Highest expression in root tips, young leaves and vasculatur tissues.

The protein resides in the nucleus. Its function is as follows. Transcriptional coactivator necessary for expression of the clock genes PRR5 and TOC1. Antagonizes REV8 function in the regulation of anthocyanin accumulation. Involved in red light input to the clock. Activates clock-controlled genes with afternoon peak. Mediates light inhibition of hypocotyl elongation. Unable to bind to DNA, but recruited to the evening element (EE)-containing region of the PRR5 and TOC1 promoters through its interaction with the DNA binding proteins REV8 and REV4. The protein is Protein LNK2 of Arabidopsis thaliana (Mouse-ear cress).